The primary structure comprises 123 residues: MNAKIIALLIIGGGLGALTRYYISGVLPVYKDFPIGTLIVNSLASFLLGYIYGLLFSGFDISPEWRIFLGTGFCGGLSTFSTFSYETFSLLREGEIWLAFANITTNILVTIFLVFLGFILARR.

A run of 4 helical transmembrane segments spans residues 5–25 (IIAL…YISG), 35–55 (IGTL…YGLL), 67–87 (IFLG…SYET), and 100–120 (FANI…GFIL). 2 residues coordinate Na(+): Gly-75 and Ser-78.

This sequence belongs to the fluoride channel Fluc/FEX (TC 1.A.43) family.

It is found in the cell membrane. The catalysed reaction is fluoride(in) = fluoride(out). Na(+) is not transported, but it plays an essential structural role and its presence is essential for fluoride channel function. In terms of biological role, fluoride-specific ion channel. Important for reducing fluoride concentration in the cell, thus reducing its toxicity. This Pyrococcus horikoshii (strain ATCC 700860 / DSM 12428 / JCM 9974 / NBRC 100139 / OT-3) protein is Fluoride-specific ion channel FluC.